We begin with the raw amino-acid sequence, 261 residues long: 4-phosphopantoate--beta-alanine ligase (261 aa).

Residues Arg-17, Arg-39, 181-182, 187-188, and 199-200 each bind ATP; these read DL, RS, and NI.

This sequence belongs to the archaeal phosphopantothenate synthetase family. As to quaternary structure, homodimer.

It catalyses the reaction (R)-4-phosphopantoate + beta-alanine + ATP = (R)-4'-phosphopantothenate + AMP + diphosphate + H(+). It functions in the pathway cofactor biosynthesis; coenzyme A biosynthesis. Functionally, catalyzes the condensation of (R)-4-phosphopantoate and beta-alanine to 4'-phosphopantothenate in the CoA biosynthesis pathway. The sequence is that of 4-phosphopantoate--beta-alanine ligase from Thermococcus onnurineus (strain NA1).